The sequence spans 543 residues: Cytochrome P450 1B1 (543 aa).

Cys-470 is a binding site for heme.

Belongs to the cytochrome P450 family. Heme serves as cofactor. Constitutively expressed in retinal and kidney pericytes cells. Expressed in retinal endothelial cells (at protein level). Expressed in cardiac, pulmonary and aortic endothelial cells. Constitutively expressed in trabecular meshwork of the eye (at protein level).

It localises to the endoplasmic reticulum membrane. The protein localises to the microsome membrane. It is found in the mitochondrion. It catalyses the reaction an organic molecule + reduced [NADPH--hemoprotein reductase] + O2 = an alcohol + oxidized [NADPH--hemoprotein reductase] + H2O + H(+). The enzyme catalyses 17beta-estradiol + reduced [NADPH--hemoprotein reductase] + O2 = 2-hydroxy-17beta-estradiol + oxidized [NADPH--hemoprotein reductase] + H2O + H(+). The catalysed reaction is 17beta-estradiol + reduced [NADPH--hemoprotein reductase] + O2 = 4-hydroxy-17beta-estradiol + oxidized [NADPH--hemoprotein reductase] + H2O + H(+). It carries out the reaction estrone + reduced [NADPH--hemoprotein reductase] + O2 = 2-hydroxyestrone + oxidized [NADPH--hemoprotein reductase] + H2O + H(+). It catalyses the reaction estrone + reduced [NADPH--hemoprotein reductase] + O2 = 4-hydroxyestrone + oxidized [NADPH--hemoprotein reductase] + H2O + H(+). The enzyme catalyses testosterone + reduced [NADPH--hemoprotein reductase] + O2 = 6beta,17beta-dihydroxyandrost-4-en-3-one + oxidized [NADPH--hemoprotein reductase] + H2O + H(+). The catalysed reaction is progesterone + reduced [NADPH--hemoprotein reductase] + O2 = 6beta-hydroxyprogesterone + oxidized [NADPH--hemoprotein reductase] + H2O + H(+). It carries out the reaction progesterone + reduced [NADPH--hemoprotein reductase] + O2 = 16alpha-hydroxyprogesterone + oxidized [NADPH--hemoprotein reductase] + H2O + H(+). It catalyses the reaction all-trans-retinol + reduced [NADPH--hemoprotein reductase] + O2 = all-trans-retinal + oxidized [NADPH--hemoprotein reductase] + 2 H2O + H(+). The enzyme catalyses all-trans-retinal + reduced [NADPH--hemoprotein reductase] + O2 = all-trans-retinoate + oxidized [NADPH--hemoprotein reductase] + H2O + 2 H(+). The catalysed reaction is (5Z,8Z,11Z,14Z)-eicosatetraenoate + reduced [NADPH--hemoprotein reductase] + O2 = (8R,9S)-epoxy-(5Z,11Z,14Z)-eicosatrienoate + oxidized [NADPH--hemoprotein reductase] + H2O + H(+). It carries out the reaction (5Z,8Z,11Z,14Z)-eicosatetraenoate + reduced [NADPH--hemoprotein reductase] + O2 = (11R,12S)-epoxy-(5Z,8Z,14Z)-eicosatrienoate + oxidized [NADPH--hemoprotein reductase] + H2O + H(+). It catalyses the reaction (5Z,8Z,11Z,14Z)-eicosatetraenoate + reduced [NADPH--hemoprotein reductase] + O2 = (11S,12R)-epoxy-(5Z,8Z,14Z)-eicosatrienoate + oxidized [NADPH--hemoprotein reductase] + H2O + H(+). The enzyme catalyses (5Z,8Z,11Z,14Z)-eicosatetraenoate + reduced [NADPH--hemoprotein reductase] + O2 = (14R,15S)-epoxy-(5Z,8Z,11Z)-eicosatrienoate + oxidized [NADPH--hemoprotein reductase] + H2O + H(+). The catalysed reaction is (5S)-hydroperoxy-(6E,8Z,11Z,14Z)-eicosatetraenoate = 5-oxo-(6E,8Z,11Z,14Z)-eicosatetraenoate + H2O. It carries out the reaction (12S)-hydroperoxy-(5Z,8Z,10E,14Z)-eicosatetraenoate = 12-oxo-(5Z,8Z,10E,14Z)-eicosatetraenoate + H2O. It catalyses the reaction (13S)-hydroperoxy-(9Z,11E)-octadecadienoate = 13-oxo-(9Z,11E)-octadecadienoate + H2O. The enzyme catalyses (15S)-hydroperoxy-(5Z,8Z,11Z,13E)-eicosatetraenoate = 15-oxo-(5Z,8Z,11Z,13E)-eicosatetraenoate + H2O. It participates in steroid hormone biosynthesis. The protein operates within cofactor metabolism; retinol metabolism. It functions in the pathway lipid metabolism; arachidonate metabolism. With respect to regulation, enzyme activity is increased by cytochrome b5. Enzyme activity is increased by liposomes containing anionic phospholipids, phosphatidic acid and cardiolipin. Inhibited by naringenin with an IC(50) of 5 uM. Functionally, a cytochrome P450 monooxygenase involved in the metabolism of various endogenous substrates, including fatty acids, steroid hormones and vitamins. Mechanistically, uses molecular oxygen inserting one oxygen atom into a substrate, and reducing the second into a water molecule, with two electrons provided by NADPH via cytochrome P450 reductase (NADPH--hemoprotein reductase). Exhibits catalytic activity for the formation of hydroxyestrogens from 17beta-estradiol (E2), namely 2- and 4-hydroxy E2. Metabolizes testosterone and progesterone to B or D ring hydroxylated metabolites. May act as a major enzyme for all-trans retinoic acid biosynthesis in extrahepatic tissues. Catalyzes two successive oxidative transformation of all-trans retinol to all-trans retinal and then to the active form all-trans retinoic acid. Catalyzes the epoxidation of double bonds of certain PUFA. Converts arachidonic acid toward epoxyeicosatrienoic acid (EpETrE) regioisomers, 8,9-, 11,12-, and 14,15- EpETrE, that function as lipid mediators in the vascular system. Additionally, displays dehydratase activity toward oxygenated eicosanoids hydroperoxyeicosatetraenoates (HpETEs). This activity is independent of cytochrome P450 reductase, NADPH, and O2. Also involved in the oxidative metabolism of xenobiotics, particularly converting polycyclic aromatic hydrocarbons and heterocyclic aryl amines procarcinogens to DNA-damaging products. Plays an important role in retinal vascular development. Under ambient/hyperoxic O2 conditions, promotes angiogenesis and capillary morphogenesis of retinal endothelial cells and pericytes, likely by metabolizing the oxygenated products symptomatic of oxidative stress. Also, contributes to oxidative homeostasis and ultrastructural organization and function of trabecular meshwork tissue through modulation of POSTN expression. The polypeptide is Cytochrome P450 1B1 (Mus musculus (Mouse)).